The following is a 557-amino-acid chain: MTVCRFWQQGYCRNGNACKFEHPPKGGQNYNRFGALSGSGQGMGGRVSEPPHYPGLSEDAIQKDLTSELPTWILSCYGPGRDAPEQLFGGYPREQSFEEIRLHFYNGLMAGNPQGALNEIQAAYQAAQQQIQNTLQNIPAAVQFILDAANKHPNRIDICRESSKGSSTGGSVFGRNVNPFQQSSAAPLNPFGAPSTPSTSAFGQPSPLGQKSSAFGTPAFGQPSQPVSAFGKPSALGGGSAFGSPQTGSTFGQPSVLGAKPSAFGQPAFGQPAFGQPAFGQSAFGQPSALGPKPGAFGTSAGSAFGASTTTAPSPFGAAAQATQPANPFGQPSQQAANSFGKPAAPASAFGQPSTTTAQNPFGQPSTQSSAFGQQQPQQAGTFGSPSLFGQQQQQPSNVFGQPSTTSAFGSQAATSGFSQLGNATSTIGASPAGAQAPASKSPYHPGSTRQHPDLLSYATKNPAGGLDTFKGKPVVYETPKGAAKPVPHIRQFDGTLVRIWMPDGAPAYTADTEAEDPKVYEDEGVKRQWQSFLEKGRFEGGMPEVPPRREWCVWDF.

The segment at 1 to 25 (MTVCRFWQQGYCRNGNACKFEHPPK) adopts a C3H1-type zinc-finger fold. A coiled-coil region spans residues 114–141 (QGALNEIQAAYQAAQQQIQNTLQNIPAA). Residues 161–297 (ESSKGSSTGG…SALGPKPGAF (137 aa)) are disordered. 10 SXFG repeats span residues 171–174 (SVFG), 200–203 (SAFG), 213–216 (SAFG), 228–231 (SAFG), 240–243 (SAFG), 249–252 (STFG), 262–265 (SAFG), 282–285 (SAFG), 303–306 (SAFG), and 314–317 (SPFG). Polar residues predominate over residues 195 to 215 (STPSTSAFGQPSPLGQKSSAF). Positions 243-253 (GSPQTGSTFGQ) are enriched in polar residues. The tract at residues 315 to 463 (PFGAAAQATQ…DLLSYATKNP (149 aa)) is disordered. 2 stretches are compositionally biased toward polar residues: residues 321–338 (QATQPANPFGQPSQQAAN) and 351–366 (GQPSTTTAQNPFGQPS). SXFG repeat units follow at residues 348–351 (SAFG), 370–373 (SAFG), 387–390 (SLFG), and 407–410 (SAFG). Low complexity predominate over residues 367-385 (TQSSAFGQQQPQQAGTFGS). The segment covering 388-429 (LFGQQQQQPSNVFGQPSTTSAFGSQAATSGFSQLGNATSTIG) has biased composition (polar residues). The span at 430 to 443 (ASPAGAQAPASKSP) shows a compositional bias: low complexity.

The nuclear pore complex (NPC) constitutes the exclusive means of nucleocytoplasmic transport. NPCs allow the passive diffusion of ions and small molecules and the active, nuclear transport receptor-mediated bidirectional transport of macromolecules such as proteins, RNAs, ribonucleoparticles (RNPs), and ribosomal subunits across the nuclear envelope. The 55-60 MDa NPC is composed of at least 28 different subunits: AMO1, ELYS, GLE1, GLE2, MLP1, NDC1, NIC96, NSP1, NUP133, NUP145, NUP152, NUP159, NUP170, NUP188, NUP192, NUP37, NUP49, NUP53, NUP56, NUP57, NUP82, NUP84, NUP85, POM152, POM33, POM34, SEC13 and SEH1. Due to its 8-fold rotational symmetry, all subunits are present with 8 copies or multiples thereof.

It localises to the nucleus. Its subcellular location is the nuclear pore complex. It is found in the nucleus membrane. Its function is as follows. Functions as a component of the nuclear pore complex (NPC). NPC components, collectively referred to as nucleoporins (NUPs), can play the role of both NPC structural components and of docking or interaction partners for transiently associated nuclear transport factors. Active directional transport is assured by both, a Phe-Gly (FG) repeat affinity gradient for these transport factors across the NPC and a transport cofactor concentration gradient across the nuclear envelope (GSP1 and GSP2 GTPases associated predominantly with GTP in the nucleus, with GDP in the cytoplasm). AMO1 is specifically important for nuclear protein and mRNA export. In Chaetomium thermophilum (strain DSM 1495 / CBS 144.50 / IMI 039719) (Thermochaetoides thermophila), this protein is Nucleoporin AMO1 (AMO1).